A 40-amino-acid polypeptide reads, in one-letter code: Photosystem II reaction center protein J (40 aa).

The chain crosses the membrane as a helical span at residues 8–28; sequence IPLWMIGTLAGILVISLIGIF.

Belongs to the PsbJ family. PSII is composed of 1 copy each of membrane proteins PsbA, PsbB, PsbC, PsbD, PsbE, PsbF, PsbH, PsbI, PsbJ, PsbK, PsbL, PsbM, PsbT, PsbX, PsbY, PsbZ, Psb30/Ycf12, at least 3 peripheral proteins of the oxygen-evolving complex and a large number of cofactors. It forms dimeric complexes.

It is found in the plastid membrane. Functionally, one of the components of the core complex of photosystem II (PSII). PSII is a light-driven water:plastoquinone oxidoreductase that uses light energy to abstract electrons from H(2)O, generating O(2) and a proton gradient subsequently used for ATP formation. It consists of a core antenna complex that captures photons, and an electron transfer chain that converts photonic excitation into a charge separation. The protein is Photosystem II reaction center protein J of Cuscuta gronovii (Common dodder).